The sequence spans 83 residues: U5-theraphotoxin-Hs1a 4 (83 aa).

The signal sequence occupies residues 1–21 (MKTSMFLTLTGLVLLFVDCYA). Positions 22 to 49 (SESEEKEFPKELLSSIFAADSDFKVEER) are excised as a propeptide. Cystine bridges form between Cys-51–Cys-63, Cys-56–Cys-68, and Cys-62–Cys-75.

The protein belongs to the neurotoxin 10 (Hwtx-1) family. 51 (Hntx-8) subfamily. Hntx-8 sub-subfamily. As to expression, expressed by the venom gland.

Its subcellular location is the secreted. Functionally, agglutinates erythrocytes. The chain is U5-theraphotoxin-Hs1a 4 from Cyriopagopus schmidti (Chinese bird spider).